Here is a 425-residue protein sequence, read N- to C-terminus: WD repeat-containing protein jip5 (425 aa).

WD repeat units follow at residues 9–48 (PLSA…AASD), 72–111 (RHKG…VENK), 117–158 (EKNG…SKVS), 221–262 (ISST…DQDE), and 318–355 (DETE…ADRY). The tract at residues 40-63 (LPTDEAASDDDETSNASSRNGRGH) is disordered. A disordered region spans residues 358 to 425 (MPGEKRMYGD…LDSMESSVVY (68 aa)). The segment covering 367-385 (DSDDSDEGDDSDDDSDDSD) has biased composition (acidic residues). Positions 395–404 (NKRKKTKAKG) are enriched in basic residues.

This sequence belongs to the WD repeat WDR55 family.

It is found in the nucleus. The protein resides in the nucleolus. The polypeptide is WD repeat-containing protein jip5 (jip5) (Aspergillus niger (strain ATCC MYA-4892 / CBS 513.88 / FGSC A1513)).